The primary structure comprises 402 residues: Alanine racemase (402 aa).

K34 functions as the Proton acceptor; specific for D-alanine in the catalytic mechanism. K34 carries the post-translational modification N6-(pyridoxal phosphate)lysine. R133 contacts substrate. The RPE1 insert domain occupies 226-271 (EVSYNLSYKEKFERNTPALATTVCINKCADVNTRLTYKVPLKGSYR). Y296 acts as the Proton acceptor; specific for L-alanine in catalysis. A substrate-binding site is contributed by M344.

It belongs to the alanine racemase family. Pyridoxal 5'-phosphate serves as cofactor.

The catalysed reaction is L-alanine = D-alanine. The protein operates within amino-acid biosynthesis; D-alanine biosynthesis; D-alanine from L-alanine: step 1/1. Its function is as follows. Catalyzes the interconversion of L-alanine and D-alanine. May also act on other amino acids. In Rickettsia typhi (strain ATCC VR-144 / Wilmington), this protein is Alanine racemase (alr).